The sequence spans 778 residues: pH-response regulator protein palH/prr-4 (778 aa).

At 1–108 the chain is on the extracellular side; it reads MEPRQLFSDP…DPFYASTFPQ (108 aa). A helical transmembrane segment spans residues 109-129; sequence CYALAATTIIAYTLVIMLFIT. The Periplasmic portion of the chain corresponds to 130-160; it reads PRSFLDGGVVVLGRKGFTNGGGGTSIGGRPW. A helical transmembrane segment spans residues 161–181; sequence LQKVAALSVAISLTIANAATF. Over 182–201 the chain is Extracellular; it reads RAAEQQYSWGVQNAKQLQED. The chain crosses the membrane as a helical span at residues 202–222; the sequence is VLGGAELKIIRIISDTFLWLA. The Periplasmic portion of the chain corresponds to 223–237; it reads QAQTLIRLFPRQREK. Residues 238-258 traverse the membrane as a helical segment; sequence VIIKWTAFALITLDVIFQSLN. At 259–275 the chain is on the extracellular side; it reads SFKYGGSDLTRPKFTEA. Residues 276 to 296 traverse the membrane as a helical segment; sequence VPALSYLFALALGVLYAAWVL. Topologically, residues 297–314 are periplasmic; it reads YYSIMKKRYAFYHPLMKN. Residues 315–335 traverse the membrane as a helical segment; sequence MILVAVLSVVSILVPVVFFIL. Residues 336–341 lie on the Extracellular side of the membrane; it reads DISKPD. Residues 342–362 form a helical membrane-spanning segment; the sequence is FAGWGDYVRWVGAAAASVIVW. The Periplasmic segment spans residues 363-778; the sequence is EWVERIEALE…RSDSSTTPSP (416 aa). Disordered regions lie at residues 394-499, 514-605, and 660-778; these read ASQS…DTTS, ELTS…DENS, and ELNH…TPSP. Residues 446–456 show a composition bias toward basic and acidic residues; it reads HRTEPSSRNEP. The segment covering 457 to 466 has biased composition (polar residues); sequence NEGSSPVAET. Basic and acidic residues-rich tracts occupy residues 588 to 605 and 661 to 675; these read FVTRSEPRSSKMQRDENS and LNHSSREGTVREESR. Positions 720 to 732 are enriched in polar residues; sequence PIVTQGSFTNNRY. The span at 749 to 759 shows a compositional bias: low complexity; it reads ARAPSQPQSPS. Positions 769-778 are enriched in polar residues; the sequence is RSDSSTTPSP.

It belongs to the palH/RIM21 family.

The protein resides in the cell membrane. Required for the proteolytic cleavage of the transcription factor pacc-1 in response to alkaline ambient pH. The polypeptide is pH-response regulator protein palH/prr-4 (prr-4) (Neurospora crassa (strain ATCC 24698 / 74-OR23-1A / CBS 708.71 / DSM 1257 / FGSC 987)).